Here is a 130-residue protein sequence, read N- to C-terminus: Small ribosomal subunit protein uS9 (130 aa).

This sequence belongs to the universal ribosomal protein uS9 family.

The protein is Small ribosomal subunit protein uS9 of Shigella dysenteriae serotype 1 (strain Sd197).